The chain runs to 466 residues: Cysteine--tRNA ligase (466 aa).

Residue Cys28 coordinates Zn(2+). The 'HIGH' region signature appears at 30–40; sequence PTVYNYIHIGN. Residues Cys208, His233, and Glu237 each contribute to the Zn(2+) site. Residues 265–269 carry the 'KMSKS' region motif; the sequence is KMSKS. Lys268 contributes to the ATP binding site.

It belongs to the class-I aminoacyl-tRNA synthetase family. In terms of assembly, monomer. The cofactor is Zn(2+).

Its subcellular location is the cytoplasm. The enzyme catalyses tRNA(Cys) + L-cysteine + ATP = L-cysteinyl-tRNA(Cys) + AMP + diphosphate. The protein is Cysteine--tRNA ligase of Staphylococcus aureus (strain MSSA476).